We begin with the raw amino-acid sequence, 1036 residues long: Hexagonally packed intermediate-layer surface protein (1036 aa).

Positions 1-17 (MKKNIALMALTGVLTLA) are cleaved as a signal peptide. Intrachain disulfides connect cysteine 74-cysteine 86, cysteine 256-cysteine 275, and cysteine 642-cysteine 754.

In terms of processing, glycosylated; contains six glycans. Post-translationally, acylated in the N-terminal region. The N-terminus is blocked.

It is found in the secreted. The protein localises to the cell wall. It localises to the S-layer. In terms of biological role, shape maintenance, possible protection from noxious enzymes or exogenous and unsettling DNA, and may mediate homotypic cell-cell contacts. This Deinococcus radiodurans protein is Hexagonally packed intermediate-layer surface protein (hpi).